The sequence spans 94 residues: Large ribosomal subunit protein bL27 (94 aa).

Residues 1 to 25 (MAHKKGTGSTRNGRDSQSKRLGVKR) are disordered.

This sequence belongs to the bacterial ribosomal protein bL27 family.

The chain is Large ribosomal subunit protein bL27 from Gloeothece citriformis (strain PCC 7424) (Cyanothece sp. (strain PCC 7424)).